Reading from the N-terminus, the 355-residue chain is UDP-N-acetylglucosamine--N-acetylmuramyl-(pentapeptide) pyrophosphoryl-undecaprenol N-acetylglucosamine transferase (355 aa).

Residues 15 to 17 (TGG), N127, R163, S191, I244, 263 to 268 (ALTVSE), and Q288 contribute to the UDP-N-acetyl-alpha-D-glucosamine site.

The protein belongs to the glycosyltransferase 28 family. MurG subfamily.

The protein localises to the cell inner membrane. It catalyses the reaction di-trans,octa-cis-undecaprenyl diphospho-N-acetyl-alpha-D-muramoyl-L-alanyl-D-glutamyl-meso-2,6-diaminopimeloyl-D-alanyl-D-alanine + UDP-N-acetyl-alpha-D-glucosamine = di-trans,octa-cis-undecaprenyl diphospho-[N-acetyl-alpha-D-glucosaminyl-(1-&gt;4)]-N-acetyl-alpha-D-muramoyl-L-alanyl-D-glutamyl-meso-2,6-diaminopimeloyl-D-alanyl-D-alanine + UDP + H(+). Its pathway is cell wall biogenesis; peptidoglycan biosynthesis. Cell wall formation. Catalyzes the transfer of a GlcNAc subunit on undecaprenyl-pyrophosphoryl-MurNAc-pentapeptide (lipid intermediate I) to form undecaprenyl-pyrophosphoryl-MurNAc-(pentapeptide)GlcNAc (lipid intermediate II). The protein is UDP-N-acetylglucosamine--N-acetylmuramyl-(pentapeptide) pyrophosphoryl-undecaprenol N-acetylglucosamine transferase of Cronobacter sakazakii (strain ATCC BAA-894) (Enterobacter sakazakii).